The primary structure comprises 282 residues: Putative lactoylglutathione lyase (282 aa).

Residue Ala2 is modified to N-acetylalanine. 2 consecutive VOC domains span residues 17 to 141 (RFLH…LIQR) and 147 to 274 (PLCQ…LVDN). His20 provides a ligand contact to Zn(2+). Substrate is bound at residue Arg24. Glu71 is a binding site for Zn(2+). Residues Asn75 and His89 each contribute to the substrate site. Residues His89 and Glu137 each contribute to the Zn(2+) site. Glu137 functions as the Proton donor/acceptor in the catalytic mechanism. 254–255 (LG) serves as a coordination point for substrate.

The protein belongs to the glyoxalase I family. The cofactor is Zn(2+).

The catalysed reaction is (R)-S-lactoylglutathione = methylglyoxal + glutathione. It functions in the pathway secondary metabolite metabolism; methylglyoxal degradation; (R)-lactate from methylglyoxal: step 1/2. Its function is as follows. Catalyzes the conversion of hemimercaptal, formed from methylglyoxal and glutathione, to S-lactoylglutathione. This Brassica oleracea var. gemmifera (Brussel sprouts) protein is Putative lactoylglutathione lyase.